The sequence spans 571 residues: Glutamine--tRNA ligase (571 aa).

Residues 35 to 45 (PEPNGYLHIGH) carry the 'HIGH' region motif. ATP-binding positions include 36-38 (EPN) and 42-48 (HIGHAKS). 2 residues coordinate L-glutamine: Asp68 and Tyr213. ATP is bound by residues Thr232, 262-263 (RL), and 270-272 (LSK). The 'KMSKS' region signature appears at 269–273 (ILSKR).

It belongs to the class-I aminoacyl-tRNA synthetase family. Monomer.

The protein resides in the cytoplasm. It catalyses the reaction tRNA(Gln) + L-glutamine + ATP = L-glutaminyl-tRNA(Gln) + AMP + diphosphate. The sequence is that of Glutamine--tRNA ligase from Buchnera aphidicola subsp. Acyrthosiphon pisum (strain Tuc7).